The chain runs to 314 residues: tRNA dimethylallyltransferase (314 aa).

11 to 18 (GPTGSGKT) contacts ATP. 13–18 (TGSGKT) contributes to the substrate binding site. Positions 36 to 39 (DSMQ) are interaction with substrate tRNA.

Belongs to the IPP transferase family. Monomer. Mg(2+) serves as cofactor.

It catalyses the reaction adenosine(37) in tRNA + dimethylallyl diphosphate = N(6)-dimethylallyladenosine(37) in tRNA + diphosphate. In terms of biological role, catalyzes the transfer of a dimethylallyl group onto the adenine at position 37 in tRNAs that read codons beginning with uridine, leading to the formation of N6-(dimethylallyl)adenosine (i(6)A). This chain is tRNA dimethylallyltransferase, found in Chlamydia trachomatis serovar D (strain ATCC VR-885 / DSM 19411 / UW-3/Cx).